The sequence spans 1039 residues: FERM domain-containing protein 4A (1039 aa).

Positions 20-322 (RRCQVHLLDD…SQHQFYLDRK (303 aa)) constitute an FERM domain. The necessary for interaction with CYTH1 stretch occupies residues 358-420 (KGKIISGSSG…KLCLREAELT (63 aa)). The segment covering 366–382 (SGSLLSSGSQESDSSQS) has biased composition (low complexity). A disordered region spans residues 366–386 (SGSLLSSGSQESDSSQSAKKD). The stretch at 382 to 416 (SAKKDMLAALKSRQEALEETLRQRLEELKKLCLRE) forms a coiled coil. The residue at position 530 (Ser-530) is a Phosphoserine. The disordered stretch occupies residues 553 to 680 (DEDSQVTSTI…MPSTPDLRVR (128 aa)). A compositionally biased stretch (pro residues) spans 571-586 (GLPPRPPSHNRPPPPQ). Residues 579 to 939 (HNRPPPPQSL…QWYQRSTASH (361 aa)) are necessary for tight junction and adherens junction localization; Requires for interaction with PARD3. Phosphoserine is present on residues Ser-604 and Ser-615. Residues 623–638 (VKKRSSHSHSSSHKRF) show a composition bias toward basic residues. Phosphoserine is present on residues Ser-681 and Ser-711. 2 disordered regions span residues 713–756 (ESQG…HSSS) and 772–813 (AEDS…AGGA). Positions 788–800 (RAAGALGSASSGS) are enriched in low complexity. Phosphoserine occurs at positions 800, 872, and 901. 2 disordered regions span residues 879–968 (FKES…STFV) and 980–1039 (CKAT…STDE). The span at 896-905 (LTPSRSQILR) shows a compositional bias: polar residues. Over residues 912-929 (EGAHDKGAGRAAVSDELR) the composition is skewed to basic and acidic residues. Positions 946–966 (SHTSSTSSDSGSQYSTSSQST) are enriched in low complexity. Composition is skewed to polar residues over residues 986–1000 (ALPQ…SSEI) and 1013–1023 (TWQTGEATENS).

In terms of assembly, interacts (via coiled-coil domain) with CYTH1 (via coiled-coil domain). Interacts with PARD3 (via coiled-coil domain). Found in a complex with PARD3, CYTH1 and FRMD4A. Interacts with CYTH2. Interacts with CYTH3.

Its subcellular location is the cytoplasm. It localises to the cytoskeleton. It is found in the cell junction. The protein localises to the adherens junction. The protein resides in the tight junction. Its function is as follows. Scaffolding protein that regulates epithelial cell polarity by connecting ARF6 activation with the PAR3 complex. Plays a redundant role with FRMD4B in epithelial polarization. May regulate MAPT secretion by activating ARF6-signaling. This chain is FERM domain-containing protein 4A, found in Homo sapiens (Human).